Here is a 556-residue protein sequence, read N- to C-terminus: 2-succinyl-5-enolpyruvyl-6-hydroxy-3-cyclohexene-1-carboxylate synthase (556 aa).

This sequence belongs to the TPP enzyme family. MenD subfamily. In terms of assembly, homodimer. Mg(2+) is required as a cofactor. It depends on Mn(2+) as a cofactor. Thiamine diphosphate serves as cofactor.

The enzyme catalyses isochorismate + 2-oxoglutarate + H(+) = 5-enolpyruvoyl-6-hydroxy-2-succinyl-cyclohex-3-ene-1-carboxylate + CO2. It functions in the pathway quinol/quinone metabolism; 1,4-dihydroxy-2-naphthoate biosynthesis; 1,4-dihydroxy-2-naphthoate from chorismate: step 2/7. Its pathway is quinol/quinone metabolism; menaquinone biosynthesis. Its function is as follows. Catalyzes the thiamine diphosphate-dependent decarboxylation of 2-oxoglutarate and the subsequent addition of the resulting succinic semialdehyde-thiamine pyrophosphate anion to isochorismate to yield 2-succinyl-5-enolpyruvyl-6-hydroxy-3-cyclohexene-1-carboxylate (SEPHCHC). The polypeptide is 2-succinyl-5-enolpyruvyl-6-hydroxy-3-cyclohexene-1-carboxylate synthase (Salmonella agona (strain SL483)).